The chain runs to 327 residues: MSLTTDIKDELARVSVTRQSAKAAEVSALLRFAGEMQAIAGRLVIEVNLDSMAVARRLQEFISQLYDTDVQVHTVTPGGARKNPKYLVRIVHNADEVARRAGLVTRSGHLIRGLSPQVISGTISEAEAAWRGAFLAGGSLTDPGRSSALEVVCPCQEAALALVGCARRIGVTAKTKDSRGSERVVVRDAEAIGALLTRIGAQKSRIVWEEKRLSREVRTPANRLANFDDANLRRSARAAVAAAARVERAMKILGDDVPEHLAEAGQLRVQHRQASLEELGRLADPQMTKDAVAGRIRRLLTTADKRARDLGIPDTTVAVTEELLDEL.

Residues serine 275–arginine 308 constitute a DNA-binding region (H-T-H motif).

This sequence belongs to the WhiA family.

In terms of biological role, involved in cell division and chromosome segregation. The chain is Probable cell division protein WhiA from Corynebacterium efficiens (strain DSM 44549 / YS-314 / AJ 12310 / JCM 11189 / NBRC 100395).